The chain runs to 954 residues: Isoleucine--tRNA ligase (954 aa).

Residues 60–70 (PYANGALHMGH) carry the 'HIGH' region motif. Glu-564 serves as a coordination point for L-isoleucyl-5'-AMP. The 'KMSKS' region signature appears at 605-609 (KMSKS). Lys-608 is an ATP binding site. 4 residues coordinate Zn(2+): Cys-923, Cys-926, Cys-943, and Cys-946.

This sequence belongs to the class-I aminoacyl-tRNA synthetase family. IleS type 1 subfamily. Monomer. The cofactor is Zn(2+).

The protein localises to the cytoplasm. It catalyses the reaction tRNA(Ile) + L-isoleucine + ATP = L-isoleucyl-tRNA(Ile) + AMP + diphosphate. In terms of biological role, catalyzes the attachment of isoleucine to tRNA(Ile). As IleRS can inadvertently accommodate and process structurally similar amino acids such as valine, to avoid such errors it has two additional distinct tRNA(Ile)-dependent editing activities. One activity is designated as 'pretransfer' editing and involves the hydrolysis of activated Val-AMP. The other activity is designated 'posttransfer' editing and involves deacylation of mischarged Val-tRNA(Ile). This is Isoleucine--tRNA ligase from Synechococcus sp. (strain ATCC 27144 / PCC 6301 / SAUG 1402/1) (Anacystis nidulans).